We begin with the raw amino-acid sequence, 320 residues long: HPr kinase/phosphorylase (320 aa).

Active-site residues include His-141 and Lys-162. Position 156–163 (156–163) interacts with ATP; it reads GHSGLGKS. Ser-163 is a Mg(2+) binding site. The Proton acceptor; for phosphorylation activity. Proton donor; for dephosphorylation activity role is filled by Asp-180. The interval 204–213 is important for the catalytic mechanism of both phosphorylation and dephosphorylation; that stretch reads LEVRGLGILN. Residue Glu-205 participates in Mg(2+) binding. Arg-248 is an active-site residue. The important for the catalytic mechanism of dephosphorylation stretch occupies residues 269–274; sequence PVAVGR.

It belongs to the HPrK/P family. In terms of assembly, homohexamer. It depends on Mg(2+) as a cofactor.

The enzyme catalyses [HPr protein]-L-serine + ATP = [HPr protein]-O-phospho-L-serine + ADP + H(+). The catalysed reaction is [HPr protein]-O-phospho-L-serine + phosphate + H(+) = [HPr protein]-L-serine + diphosphate. Its function is as follows. Catalyzes the ATP- as well as the pyrophosphate-dependent phosphorylation of a specific serine residue in HPr, a phosphocarrier protein of the phosphoenolpyruvate-dependent sugar phosphotransferase system (PTS). HprK/P also catalyzes the pyrophosphate-producing, inorganic phosphate-dependent dephosphorylation (phosphorolysis) of seryl-phosphorylated HPr (P-Ser-HPr). This chain is HPr kinase/phosphorylase, found in Neisseria meningitidis serogroup A / serotype 4A (strain DSM 15465 / Z2491).